Reading from the N-terminus, the 472-residue chain is Carbohydrate sulfotransferase 3 (472 aa).

The Cytoplasmic portion of the chain corresponds to 1 to 19 (MEKGLALPQDFRDLVHSLK). A helical; Signal-anchor for type II membrane protein membrane pass occupies residues 20-38 (IRGRYVLFLAFVVIVFIFI). Residues 39 to 472 (EKENKIISRV…LEERGTFWVT (434 aa)) are Lumenal-facing. N-linked (GlcNAc...) asparagine glycosylation is found at Asn-63, Asn-74, and Asn-96. Residue 135–141 (TRTGSSF) participates in 3'-phosphoadenylyl sulfate binding. Asn-250 carries N-linked (GlcNAc...) asparagine glycosylation. 295–303 (RDPRAVLAS) provides a ligand contact to 3'-phosphoadenylyl sulfate. Residues Asn-413 and Asn-457 are each glycosylated (N-linked (GlcNAc...) asparagine).

Belongs to the sulfotransferase 1 family. Gal/GlcNAc/GalNAc subfamily. Post-translationally, N-glycosylated. As to expression, widely expressed. Highly expressed in spleen, lung, eye and stomach. Constitutively expressed at low level during the mid- to late-gestation period. Expressed in the brain in a temporally controlled manner: peaks at 2 weeks after birth in the cerebellum, but at 3 weeks in the cerebrum. Localizes to stromal cells in the bone marrow, and stromal cells in the marginal zone and red pulp of the spleen, but the sense probe did not.

The protein resides in the golgi apparatus membrane. It carries out the reaction chondroitin beta-D-glucuronate + n 3'-phosphoadenylyl sulfate = chondroitin 6'-sulfate + n adenosine 3',5'-bisphosphate + n H(+). The enzyme catalyses 3'-phosphoadenylyl sulfate + keratan = adenosine 3',5'-bisphosphate + keratan 6'-sulfate.. Sulfotransferase that utilizes 3'-phospho-5'-adenylyl sulfate (PAPS) as sulfonate donor to catalyze the transfer of sulfate to position 6 of the N-acetylgalactosamine (GalNAc) residue of chondroitin. Chondroitin sulfate constitutes the predominant proteoglycan present in cartilage and is distributed on the surfaces of many cells and extracellular matrices. Catalyzes with a lower efficiency the sulfation of Gal residues of keratan sulfate, another glycosaminoglycan. Can also catalyze the sulfation of the Gal residues in sialyl N-acetyllactosamine (sialyl LacNAc) oligosaccharides. May play a role in the maintenance of naive T-lymphocytes in the spleen. The sequence is that of Carbohydrate sulfotransferase 3 (Chst3) from Mus musculus (Mouse).